The chain runs to 467 residues: ATP synthase subunit beta (467 aa).

154 to 161 (GGAGVGKT) is an ATP binding site.

This sequence belongs to the ATPase alpha/beta chains family. F-type ATPases have 2 components, CF(1) - the catalytic core - and CF(0) - the membrane proton channel. CF(1) has five subunits: alpha(3), beta(3), gamma(1), delta(1), epsilon(1). CF(0) has three main subunits: a(1), b(2) and c(9-12). The alpha and beta chains form an alternating ring which encloses part of the gamma chain. CF(1) is attached to CF(0) by a central stalk formed by the gamma and epsilon chains, while a peripheral stalk is formed by the delta and b chains.

Its subcellular location is the cell inner membrane. It catalyses the reaction ATP + H2O + 4 H(+)(in) = ADP + phosphate + 5 H(+)(out). Functionally, produces ATP from ADP in the presence of a proton gradient across the membrane. The catalytic sites are hosted primarily by the beta subunits. This Petrotoga mobilis (strain DSM 10674 / SJ95) protein is ATP synthase subunit beta.